The sequence spans 302 residues: Lysosomal thioesterase PPT2 (302 aa).

The first 27 residues, 1–27 (MLGLCGQRLPAAWVLLLLPFLPLLLLA), serve as a signal peptide directing secretion. Asparagine 60 carries an N-linked (GlcNAc...) asparagine glycan. 2 cysteine pairs are disulfide-bonded: cysteine 109–cysteine 117 and cysteine 165–cysteine 176. Residue serine 111 is the Nucleophile of the active site. N-linked (GlcNAc...) asparagine glycans are attached at residues asparagine 190 and asparagine 206. Aspartate 228 is an active-site residue. Asparagine 245 is a glycosylation site (N-linked (GlcNAc...) asparagine). Cysteine 276 and cysteine 296 form a disulfide bridge. Residue histidine 283 is part of the active site. Asparagine 289 carries an N-linked (GlcNAc...) asparagine glycan.

Belongs to the palmitoyl-protein thioesterase family. In terms of tissue distribution, broadly expressed, with highest levels in skeletal muscle.

It localises to the lysosome. The catalysed reaction is hexadecanoyl-CoA + H2O = hexadecanoate + CoA + H(+). It carries out the reaction S-hexadecanoyl-N-acetylcysteamine + H2O = N-acetylcysteamine + hexadecanoate + H(+). In terms of biological role, catalyzes the cleavage of thioester bonds from S-palmitoyl-CoA or S-palmitoyl-N-acetylcysteamine (unbranched structures) but does not have activity against palmitoylcysteine or palmitoylated proteins, branched structures or bulky head groups. Conversely, hydrolyzes both long and short chain fatty acyl-CoA substrate. Catalytically inactive due to lack of active site His-283. This chain is Lysosomal thioesterase PPT2, found in Homo sapiens (Human).